The primary structure comprises 457 residues: Cysteine desulfurase (457 aa).

Pyridoxal 5'-phosphate contacts are provided by alanine 127, threonine 128, glutamine 235, serine 255, and histidine 257. Lysine 258 is modified (N6-(pyridoxal phosphate)lysine). A pyridoxal 5'-phosphate-binding site is contributed by threonine 295. Cysteine 381 (cysteine persulfide intermediate) is an active-site residue. Cysteine 381 is a binding site for [2Fe-2S] cluster. A Zn(2+)-binding site is contributed by cysteine 381. Position 381 is a cysteine persulfide (cysteine 381).

The protein belongs to the class-V pyridoxal-phosphate-dependent aminotransferase family. NifS/IscS subfamily. In terms of assembly, homodimer. Component of the mitochondrial core iron-sulfur cluster (ISC) complex composed of NFS1, LYRM4, NDUFAB1, ISCU, FXN, and FDX2; this complex is a heterohexamer containing two copies of each monomer. Component of cyteine desulfurase complex composed of NFS1, LYRM4 and NDUFAB1; this complex contributes to the activation of cysteine desulfurase activity and NFS1 stabilization. Interacts (homodimer form) with ISCU (D-state); each monomer interacts with the C-terminal regions of each NFS1 monomer. Interacts with HSPA9. Interacts (via homodimer form) with FDX2. Interacts (via homodimer form) with FXN. Interacts with LYRM4. Component of a complex composed of FXN, NFS1, LYRM4 and ISCU. As to quaternary structure, monomer. Homodimer. Oligomer. Interacts with ISCU. Component of the cysteine desulfurase complex composed of NFS1 and LYRM4; this complex contributes to the activation of cysteine desulfurase activity. Interacts with MOCS3. The cofactor is pyridoxal 5'-phosphate. N-gluconoylated. In terms of processing, cysteine persulfide intermediate is reduced by thiol-containing molecules like glutathione and L-cysteine. Persulfide reduction is a rate-limiting step of cysteine desulfurase catalytic cycle. Predominantly expressed in heart and skeletal muscle. Also found in brain, liver and pancreas.

It localises to the mitochondrion. The protein resides in the cytoplasm. Its subcellular location is the nucleus. The protein localises to the cytoskeleton. It is found in the microtubule organizing center. It localises to the centrosome. The catalysed reaction is (sulfur carrier)-H + L-cysteine = (sulfur carrier)-SH + L-alanine. The enzyme catalyses L-cysteinyl-[cysteine desulfurase] + L-cysteine = S-sulfanyl-L-cysteinyl-[cysteine desulfurase] + L-alanine. With respect to regulation, active only in complex with LYRM4. Cysteine desulfurase, of the core iron-sulfur cluster (ISC) assembly complex, that catalyzes the desulfuration of L-cysteine to L-alanine, as component of the cysteine desulfurase complex, leading to the formation of a cysteine persulfide intermediate at the active site cysteine residue and participates in the [2Fe-2S] clusters assembly on the scaffolding protein ISCU. The persulfide is then transferred on the flexible Cys loop from the catalytic site of NFS1 to the surface of NFS1. After the NFS1-linked persulfide sulfur is transferred to one of the conserved Cys residues of the scaffold, a reaction assisted by FXN. The core iron-sulfur cluster (ISC) assembly complex is involved in the de novo synthesis of a [2Fe-2S] cluster, the first step of the mitochondrial iron-sulfur protein biogenesis. This process is initiated by the cysteine desulfurase complex (NFS1:LYRM4:NDUFAB1) that produces persulfide which is delivered on the scaffold protein ISCU in a FXN-dependent manner. Then this complex is stabilized by FDX2 which provides reducing equivalents to accomplish the [2Fe-2S] cluster assembly. Finally, the [2Fe-2S] cluster is transferred from ISCU to chaperone proteins, including HSCB, HSPA9 and GLRX5. In terms of biological role, may catalyze the desulfuration of L-cysteine to L-alanine as component of the cysteine desulfurase complex (NFS1:LYRM4), leading to the formation of a cysteine persulfide intermediate. Acts as a sulfur donor for MOCS3 by transferring the sulfur of the cysteine persulfide intermediate on MOCS3. The protein is Cysteine desulfurase of Homo sapiens (Human).